Consider the following 390-residue polypeptide: MSLFNDKVAKLLAGHEALLMRKNEPVEEGNGVITRYRYPVLTAAHTPVFWRYDLNEETNPFLMERIGMNATLNAGAIKWDGKYLMLVRVEGADRKSFFAVAESPNGIDNFRFWEYPVTLPEDVVPATNVYDMRLTAHEDGWIYGIFCAERHDDNAPIGDLSSATATAGIARTKDLKNWERLPDLKTKSQQRNVVLHPEFVDGKYALYTRPQDGFIDTGSGGGIGWALIDDITHAEVGEEKIIDKRYYHTIKEVKNGEGPHPIKTPQGWLHLAHGVRNCAAGLRYVLYMYMTSLDDPTRLIASPAGYFMAPVGEERIGDVSNVLFSNGWIADDDGKVFIYYASSDTRMHVATSTIERLVDYCLHTPQDGFSSSASVEILKNLIERNLRLMK.

Belongs to the glycosyl hydrolase 130 family.

It carries out the reaction 4-O-beta-D-mannopyranosyl-D-glucopyranose + phosphate = alpha-D-mannose 1-phosphate + D-glucose. In terms of biological role, converts 4-O-beta-D-mannopyranosyl-D-glucopyranose (Man-Glc) to mannose 1-phosphate (Man1P) and glucose. Involved in a mannan catabolic pathway which feeds into glycolysis. The chain is 4-O-beta-D-mannosyl-D-glucose phosphorylase from Bacteroides fragilis (strain ATCC 25285 / DSM 2151 / CCUG 4856 / JCM 11019 / LMG 10263 / NCTC 9343 / Onslow / VPI 2553 / EN-2).